We begin with the raw amino-acid sequence, 735 residues long: Protostadienol synthase A (735 aa).

Residues 129 to 170 (KNEMIRYLLNFVNEDGGWGLWINSPSTVFGTTMNYTMLRILG) form a PFTB 1 repeat. Residue Asp460 is the Proton donor of the active site. PFTB repeat units lie at residues 487 to 528 (LAEA…YDNV), 564 to 604 (MARC…ETVG), and 613 to 660 (CRNA…ALMG).

The protein belongs to the terpene cyclase/mutase family.

The catalysed reaction is (S)-2,3-epoxysqualene = (17Z)-protosta-17(20),24-dien-3beta-ol. In terms of biological role, protostadienol synthase which cyclizes (3S)-oxidosqualene to (17Z)-protosta-17(20),24-dien-3-beta-ol (protostadienol), the biosynthetic precursor of helvolic acid, a secondary metabolite which promotes virulence. The protein is Protostadienol synthase A (PDSA) of Arthroderma gypseum (strain ATCC MYA-4604 / CBS 118893) (Microsporum gypseum).